A 341-amino-acid polypeptide reads, in one-letter code: MRRAVLEILEERIIHNVKEIHRFSGKRIIAVVKANAYGIGVREVSRILEGLEEVDAFAVACTQEGVELRECGIKKKILILGGILEEDVKLLEEYDLTPVISDPEHLKVLKDRNIKFHVKYDTGMGRLGFTNEIIKDPRVEGVMSHFSSPADRNFSKLQIKRFEEILKNYEKVKYIHLESSAGLIYRVPFTTHVRVGLAIYGEKPLKDYPLEVKPALRLRARLISVKELPENYPVSYGRTYITKRKTKLGVVAFGYADGLMKTLSNRSFLIFEGRKVPIIGNITMDMTMVDLSGTEARTGDWVYIVNEERSFTPLARDAGTIPYEIMCNLSRRVERLVIKKR.

Lysine 33 serves as the catalytic Proton acceptor; specific for D-alanine. Lysine 33 carries the N6-(pyridoxal phosphate)lysine modification. Arginine 126 provides a ligand contact to substrate. Tyrosine 236 (proton acceptor; specific for L-alanine) is an active-site residue. Substrate is bound at residue methionine 284.

The protein belongs to the alanine racemase family. Pyridoxal 5'-phosphate serves as cofactor.

The enzyme catalyses L-alanine = D-alanine. It functions in the pathway amino-acid biosynthesis; D-alanine biosynthesis; D-alanine from L-alanine: step 1/1. Its function is as follows. Catalyzes the interconversion of L-alanine and D-alanine. The sequence is that of Alanine racemase (alr) from Aquifex pyrophilus.